We begin with the raw amino-acid sequence, 161 residues long: Regulator of ribonuclease activity A (161 aa).

Belongs to the RraA family. Homotrimer. Binds to both RNA-binding sites in the C-terminal region of Rne and to RhlB.

It is found in the cytoplasm. Its function is as follows. Globally modulates RNA abundance by binding to RNase E (Rne) and regulating its endonucleolytic activity. Can modulate Rne action in a substrate-dependent manner by altering the composition of the degradosome. Modulates RNA-binding and helicase activities of the degradosome. This chain is Regulator of ribonuclease activity A, found in Sodalis glossinidius (strain morsitans).